Reading from the N-terminus, the 689-residue chain is Elongation factor G (689 aa).

The 275-residue stretch at 9-283 (AKFRNIGIMA…AIIEFMPSPL (275 aa)) folds into the tr-type G domain. GTP-binding positions include 18-25 (AHIDAGKT), 82-86 (DTPGH), and 136-139 (NKMD).

This sequence belongs to the TRAFAC class translation factor GTPase superfamily. Classic translation factor GTPase family. EF-G/EF-2 subfamily.

It localises to the cytoplasm. In terms of biological role, catalyzes the GTP-dependent ribosomal translocation step during translation elongation. During this step, the ribosome changes from the pre-translocational (PRE) to the post-translocational (POST) state as the newly formed A-site-bound peptidyl-tRNA and P-site-bound deacylated tRNA move to the P and E sites, respectively. Catalyzes the coordinated movement of the two tRNA molecules, the mRNA and conformational changes in the ribosome. The polypeptide is Elongation factor G (Clostridium botulinum (strain ATCC 19397 / Type A)).